The sequence spans 181 residues: uncharacterized protein (181 aa).

The disordered stretch occupies residues 126–148; sequence SYKDKEEEEDEDPEEDDDDPRVQ. Positions 131-144 are enriched in acidic residues; sequence EEEEDEDPEEDDDD.

Belongs to the chlamydial CPn_0422/CT_273/TC_0545 family.

This is an uncharacterized protein from Chlamydia pneumoniae (Chlamydophila pneumoniae).